The chain runs to 524 residues: Chitinase D (524 aa).

Positions M1–A30 are cleaved as a signal peptide. A Fibronectin type-III domain is found at V95 to G180. Residues K190–L514 enclose the GH18 domain. E303 serves as the catalytic Proton donor.

The protein belongs to the glycosyl hydrolase 18 family. Chitinase class II subfamily.

It catalyses the reaction Random endo-hydrolysis of N-acetyl-beta-D-glucosaminide (1-&gt;4)-beta-linkages in chitin and chitodextrins.. This chain is Chitinase D (chiD), found in Niallia circulans (Bacillus circulans).